The following is a 608-amino-acid chain: CTP synthase (608 aa).

Residues 1 to 271 (MGQAHITKHI…DAYVVRRLGL (271 aa)) form an amidoligase domain region. Ser-18 lines the CTP pocket. Ser-18 contributes to the UTP binding site. Residues 19-24 (SLGKGL) and Asp-76 each bind ATP. Residues Asp-76 and Glu-145 each coordinate Mg(2+). CTP is bound by residues 152-154 (DIE), 192-197 (KTKPTQ), and Lys-228. UTP contacts are provided by residues 192–197 (KTKPTQ) and Lys-228. Residues 296–545 (TIAIVGKYVD…VAAAVAHADR (250 aa)) form the Glutamine amidotransferase type-1 domain. Residue Gly-359 coordinates L-glutamine. Catalysis depends on Cys-386, which acts as the Nucleophile; for glutamine hydrolysis. Residues 387–390 (LGLQ), Glu-410, and Arg-471 each bind L-glutamine. Active-site residues include His-518 and Glu-520. A disordered region spans residues 550–608 (LPVDLPSEDAPTPENGVPENGAAQTRGVTAGRSGGSIRRGASASRPSVSSNGTAALVSP). The span at 584 to 594 (GSIRRGASASR) shows a compositional bias: low complexity.

It belongs to the CTP synthase family. Homotetramer.

The catalysed reaction is UTP + L-glutamine + ATP + H2O = CTP + L-glutamate + ADP + phosphate + 2 H(+). It carries out the reaction L-glutamine + H2O = L-glutamate + NH4(+). The enzyme catalyses UTP + NH4(+) + ATP = CTP + ADP + phosphate + 2 H(+). It functions in the pathway pyrimidine metabolism; CTP biosynthesis via de novo pathway; CTP from UDP: step 2/2. With respect to regulation, allosterically activated by GTP, when glutamine is the substrate; GTP has no effect on the reaction when ammonia is the substrate. The allosteric effector GTP functions by stabilizing the protein conformation that binds the tetrahedral intermediate(s) formed during glutamine hydrolysis. Inhibited by the product CTP, via allosteric rather than competitive inhibition. Catalyzes the ATP-dependent amination of UTP to CTP with either L-glutamine or ammonia as the source of nitrogen. Regulates intracellular CTP levels through interactions with the four ribonucleotide triphosphates. The polypeptide is CTP synthase (Frankia casuarinae (strain DSM 45818 / CECT 9043 / HFP020203 / CcI3)).